We begin with the raw amino-acid sequence, 432 residues long: Glycerophosphocholine acyltransferase 1 (432 aa).

Residues 1 to 110 (MYKLDNNDID…DSIFFKNSSR (110 aa)) are Cytoplasmic-facing. Ser78 carries the phosphoserine modification. The chain crosses the membrane as a helical span at residues 111 to 131 (LEKAFYPFTLFNIFFIGFLMG). Position 132 (Arg132) is a topological domain, lumenal. Residues 133–153 (FPEWFHVYYTILFFVLMPIRF) traverse the membrane as a helical segment. Topologically, residues 154 to 162 (YTYYKTKNH) are cytoplasmic. The chain crosses the membrane as a helical span at residues 163-183 (YFLADFCYFVNMLCLLFIWIF). Residues 184–187 (PYSY) are Lumenal-facing. A helical membrane pass occupies residues 188 to 208 (SLFQSCFAFTFGTLCFAVITW). At 209–221 (RNSLVIHSIDKTT) the chain is on the cytoplasmic side. Residues 222–242 (SCFIHIIPPCVMYVIYHGLPL) form a helical membrane-spanning segment. Residues 243–263 (EYKIERFPGAIIQSELDIKKN) are Lumenal-facing. Residues 264-284 (ILWTSLYYLVWQSLYHYFITL) form a helical membrane-spanning segment. At 285 to 318 (KKSSKIKSGERMTSFEYLTTHQFKNFWAVKLRSP) the chain is on the cytoplasmic side. The chain crosses the membrane as a helical span at residues 319–339 (WPMIIYTLSQYFYQLFTMLLC). Residues 340 to 346 (GIWIRYK) are Lumenal-facing. Residues 347-369 (LAAALFLTIVFLWASHNGATYYI) form a helical membrane-spanning segment. The Cytoplasmic segment spans residues 370–432 (DHYGKNFEKE…DSSSVSSKSD (63 aa)). The segment at 413 to 432 (LNVNRDEDFDDSSSVSSKSD) is disordered.

This sequence belongs to the GPC1 family.

The protein resides in the membrane. It catalyses the reaction sn-glycerol 3-phosphocholine + an acyl-CoA = a 1-acyl-sn-glycero-3-phosphocholine + CoA. It carries out the reaction sn-glycero-3-phosphoethanolamine + an acyl-CoA = a monoacyl-sn-glycero-3-phosphoethanolamine + CoA. The catalysed reaction is sn-glycero-3-phosphoethanolamine + (9Z)-octadecenoyl-CoA = (9Z-octadecenoyl)-sn-glycero-3-phosphoethanolamine + CoA. The enzyme catalyses sn-glycerol 3-phosphocholine + hexadecanoyl-CoA = hexadecanoyl-sn-glycero-3-phosphocholine + CoA. It catalyses the reaction (9Z,12Z)-octadecadienoyl-CoA + sn-glycerol 3-phosphocholine = (9Z,12Z-octadecadienoyl)-sn-glycero-3-phosphocholine + CoA. It carries out the reaction (12R)-hydroxy-(9Z)-octadecenoyl-CoA + sn-glycerol 3-phosphocholine = (12R-hydroxy-9Z-octadecenoyl)-sn-glycero-3-phosphocholine + CoA. The catalysed reaction is (9Z,12Z,15Z)-octadecatrienoyl-CoA + sn-glycerol 3-phosphocholine = (9Z,12Z,15Z-octadecatrienoyl)-sn-glycero-3-phosphocholine + CoA. The enzyme catalyses sn-glycerol 3-phosphocholine + (9Z)-octadecenoyl-CoA = (9Z-octadecenoyl)-sn-glycero-3-phosphocholine + CoA. It catalyses the reaction 1-(9Z-octadecenoyl)-sn-glycero-3-phosphoethanolamine + sn-glycerol 3-phosphocholine = (9Z-octadecenoyl)-sn-glycero-3-phosphocholine + sn-glycero-3-phosphoethanolamine. Its activity is regulated as follows. The GPCAT activity is sensitive to N-ethylmaleimide, phenanthroline, and divalent cations including Ca(2+), Mg(2+), Mn(2+) and Zn(2+). The activity is also inhibited by glycerol-3-phosphate (G3P). Its function is as follows. Glycerophosphocholine acyltransferase (GPCAT) that utilizes acyl-CoA to acylate glycero-3-phosphocholine (GPC), forming lysophosphatidylcholine (LPC). Shows broad acyl specificities with a preference for 16:0-CoA, polyunsaturated acyl-CoA, and the hydroxylated ricinoleoyl-CoA. Also catalyzes the acylation of glycero-3-phosphoethanolamine (GPE) with acyl-CoA. In addition to acyl-CoA, GPCAT efficiently utilizes LPC and lysophosphatidylethanolamine (LPE) as acyl donors in the acylation of GPC. Contributes to the maintenance of phosphatidylcholine (PC) homeostasis and might also have specific functions in acyl editing of PC, such as transferring acyl groups modified at the sn-2 position of PC to the sn-1. Involved in postsynthetic PC remodeling that produces more saturated PC species. The chain is Glycerophosphocholine acyltransferase 1 from Saccharomyces cerevisiae (strain ATCC 204508 / S288c) (Baker's yeast).